Here is a 360-residue protein sequence, read N- to C-terminus: Photosystem II protein D1 2 (360 aa).

The next 3 helical transmembrane spans lie at 29-46 (YIGWFGVLMVPTLLSATI), 118-133 (HFLIGIFAYLGREWEF), and 142-156 (WICVAYSAPVAAATA). Position 118 (His118) interacts with chlorophyll a. Tyr126 lines the pheophytin a pocket. [CaMn4O5] cluster contacts are provided by Asp170 and Glu189. Residues 197–218 (LHMFGVAGVFGGSLFAAMHGSL) form a helical membrane-spanning segment. His198 is a chlorophyll a binding site. A quinone contacts are provided by residues His215 and 264–265 (SF). His215 lines the Fe cation pocket. His272 contributes to the Fe cation binding site. The helical transmembrane segment at 274 to 288 (FLAAWPVIGIWLTSL) threads the bilayer. His332, Glu333, Asp342, and Ala344 together coordinate [CaMn4O5] cluster. Positions 345 to 360 (GTESAPVAFAAALGDG) are excised as a propeptide.

Belongs to the reaction center PufL/M/PsbA/D family. As to quaternary structure, PSII is composed of 1 copy each of membrane proteins PsbA, PsbB, PsbC, PsbD, PsbE, PsbF, PsbH, PsbI, PsbJ, PsbK, PsbL, PsbM, PsbT, PsbX, Psb30/Ycf12, peripheral proteins PsbO, CyanoQ (PsbQ), PsbU, PsbV and a large number of cofactors. It forms dimeric complexes. The D1/D2 heterodimer binds P680, chlorophylls that are the primary electron donor of PSII, and subsequent electron acceptors. It shares a non-heme iron and each subunit binds pheophytin, quinone, additional chlorophylls, carotenoids and lipids. D1 provides most of the ligands for the Mn4-Ca-O5 cluster of the oxygen-evolving complex (OEC). There is also a Cl(-1) ion associated with D1 and D2, which is required for oxygen evolution. The PSII complex binds additional chlorophylls, carotenoids and specific lipids. is required as a cofactor. Post-translationally, tyr-161 forms a radical intermediate that is referred to as redox-active TyrZ, YZ or Y-Z. In terms of processing, C-terminally processed by CtpA; processing is essential to allow assembly of the oxygen-evolving complex and thus photosynthetic growth.

It localises to the cell inner membrane. The enzyme catalyses 2 a plastoquinone + 4 hnu + 2 H2O = 2 a plastoquinol + O2. Functionally, photosystem II (PSII) is a light-driven water:plastoquinone oxidoreductase that uses light energy to abstract electrons from H(2)O, generating O(2) and a proton gradient subsequently used for ATP formation. It consists of a core antenna complex that captures photons, and an electron transfer chain that converts photonic excitation into a charge separation. The D1/D2 (PsbA/PsbD) reaction center heterodimer binds P680, the primary electron donor of PSII as well as several subsequent electron acceptors. This chain is Photosystem II protein D1 2, found in Gloeobacter violaceus (strain ATCC 29082 / PCC 7421).